A 264-amino-acid chain; its full sequence is Thymidylate synthase (264 aa).

Arg21 serves as a coordination point for dUMP. Position 51 (His51) interacts with (6R)-5,10-methylene-5,6,7,8-tetrahydrofolate. 126–127 (RR) serves as a coordination point for dUMP. Residue Cys146 is the Nucleophile of the active site. DUMP contacts are provided by residues 166-169 (RSCD), Asn177, and 207-209 (HLY). Asp169 is a (6R)-5,10-methylene-5,6,7,8-tetrahydrofolate binding site. Ala263 is a binding site for (6R)-5,10-methylene-5,6,7,8-tetrahydrofolate.

Belongs to the thymidylate synthase family. Bacterial-type ThyA subfamily. Homodimer.

Its subcellular location is the cytoplasm. It catalyses the reaction dUMP + (6R)-5,10-methylene-5,6,7,8-tetrahydrofolate = 7,8-dihydrofolate + dTMP. Its pathway is pyrimidine metabolism; dTTP biosynthesis. In terms of biological role, catalyzes the reductive methylation of 2'-deoxyuridine-5'-monophosphate (dUMP) to 2'-deoxythymidine-5'-monophosphate (dTMP) while utilizing 5,10-methylenetetrahydrofolate (mTHF) as the methyl donor and reductant in the reaction, yielding dihydrofolate (DHF) as a by-product. This enzymatic reaction provides an intracellular de novo source of dTMP, an essential precursor for DNA biosynthesis. The sequence is that of Thymidylate synthase from Aeromonas hydrophila subsp. hydrophila (strain ATCC 7966 / DSM 30187 / BCRC 13018 / CCUG 14551 / JCM 1027 / KCTC 2358 / NCIMB 9240 / NCTC 8049).